The following is a 259-amino-acid chain: Snake venom serine protease homolog rhinocerase 2 (259 aa).

A signal peptide spans 1–17 (VLIRVLANLLLLQLSYA). Positions 18–23 (QESSEL) are excised as a propeptide. The 227-residue stretch at 24–250 (VIGGDECDIN…YTDWIEGIIA (227 aa)) folds into the Peptidase S1 domain. 6 cysteine pairs are disulfide-bonded: C30-C164, C51-C67, C99-C257, C143-C211, C175-C190, and C201-C226. The N-linked (GlcNAc...) asparagine glycan is linked to N252.

This sequence belongs to the peptidase S1 family. Snake venom subfamily. Expressed by the venom gland.

It localises to the secreted. Functionally, snake venom serine protease homolog that may act in the hemostasis system of the prey. This is Snake venom serine protease homolog rhinocerase 2 from Bitis rhinoceros (West African gaboon viper).